Consider the following 173-residue polypeptide: Alpha-crystallin A chain (173 aa).

N-acetylmethionine is present on Met1. One can recognise a sHSP domain in the interval Leu52–Glu164. 4 residues coordinate Zn(2+): His100, Glu102, His107, and His154. The disordered stretch occupies residues Thr152 to Ser173. Residues Ile153–Pro167 show a composition bias toward basic and acidic residues.

Belongs to the small heat shock protein (HSP20) family. In terms of assembly, heteropolymer composed of three CRYAA and one CRYAB subunits. Inter-subunit bridging via zinc ions enhances stability, which is crucial as there is no protein turn over in the lens. Can also form homodimers and homotetramers (dimers of dimers) which serve as the building blocks of homooligomers. Within homooligomers, the zinc-binding motif is created from residues of 3 different molecules. His-100 and Glu-102 from one molecule are ligands of the zinc ion, and His-107 and His-154 residues from additional molecules complete the site with tetrahedral coordination geometry.

The protein resides in the cytoplasm. Its subcellular location is the nucleus. In terms of biological role, contributes to the transparency and refractive index of the lens. May act as a chaperone, preventing aggregation of various proteins under a wide range of stress conditions. The sequence is that of Alpha-crystallin A chain (CRYAA) from Alligator mississippiensis (American alligator).